The primary structure comprises 216 residues: Probable nicotinate-nucleotide adenylyltransferase (216 aa).

It belongs to the NadD family.

It carries out the reaction nicotinate beta-D-ribonucleotide + ATP + H(+) = deamido-NAD(+) + diphosphate. Its pathway is cofactor biosynthesis; NAD(+) biosynthesis; deamido-NAD(+) from nicotinate D-ribonucleotide: step 1/1. Catalyzes the reversible adenylation of nicotinate mononucleotide (NaMN) to nicotinic acid adenine dinucleotide (NaAD). In Geotalea uraniireducens (strain Rf4) (Geobacter uraniireducens), this protein is Probable nicotinate-nucleotide adenylyltransferase.